Reading from the N-terminus, the 714-residue chain is Polyribonucleotide nucleotidyltransferase (714 aa).

Residues aspartate 486 and aspartate 492 each coordinate Mg(2+). The 60-residue stretch at 553-612 (PRIITMKINPEKIRDVIGKGGAVIRALTEETGTTIDIEEDGTIKIGCTSAEAGEEAKKRI) folds into the KH domain. The S1 motif domain occupies 622–690 (GQVYDGTVLK…DKGRVRLSAK (69 aa)).

Belongs to the polyribonucleotide nucleotidyltransferase family. Requires Mg(2+) as cofactor.

It localises to the cytoplasm. The catalysed reaction is RNA(n+1) + phosphate = RNA(n) + a ribonucleoside 5'-diphosphate. Its function is as follows. Involved in mRNA degradation. Catalyzes the phosphorolysis of single-stranded polyribonucleotides processively in the 3'- to 5'-direction. This chain is Polyribonucleotide nucleotidyltransferase, found in Methylobacillus flagellatus (strain ATCC 51484 / DSM 6875 / VKM B-1610 / KT).